Consider the following 264-residue polypeptide: Transcription factor bHLH52 (264 aa).

The 50-residue stretch at 134–183 folds into the bHLH domain; that stretch reads RELSAQSIAARKRRRRITEKTQELGKLIPGSQKHNTAEMFNAAAKYVKFL.

As to quaternary structure, homodimer. Expressed constitutively in roots, leaves, stems, and flowers.

The protein resides in the nucleus. The sequence is that of Transcription factor bHLH52 (BHLH52) from Arabidopsis thaliana (Mouse-ear cress).